A 706-amino-acid chain; its full sequence is Catalase HPII (706 aa).

Active-site residues include His77 and Asn151. Position 365 (Tyr365) interacts with heme. A disordered region spans residues 512–532 (EPPEEQVDESAPVSPALSQVT).

It belongs to the catalase family. HPII subfamily. It depends on heme as a cofactor.

It is found in the cytoplasm. It catalyses the reaction 2 H2O2 = O2 + 2 H2O. In terms of biological role, decomposes hydrogen peroxide into water and oxygen; serves to protect cells from the toxic effects of hydrogen peroxide. The chain is Catalase HPII (katE) from Mycobacterium avium.